Reading from the N-terminus, the 82-residue chain is Cytochrome b-c1 complex subunit 8 (82 aa).

The Mitochondrial matrix segment spans residues 1–43 (MGREFGNLARIRHVISYSLSPFEQRAFPSYFSKGIPNVLRRTR). Ser16 carries the post-translational modification Phosphoserine. An N6-acetyllysine; alternate modification is found at Lys33. N6-succinyllysine; alternate is present on Lys33. Residues 44 to 62 (ERILRVAPPFVVVYLIYTW) traverse the membrane as a helical segment. Residues 63 to 82 (GNQEFEQSKRKNPAMYENDK) lie on the Mitochondrial intermembrane side of the membrane.

Belongs to the UQCRQ/QCR8 family. As to quaternary structure, component of the ubiquinol-cytochrome c oxidoreductase (cytochrome b-c1 complex, complex III, CIII), a multisubunit enzyme composed of 11 subunits. The complex is composed of 3 respiratory subunits cytochrome b, cytochrome c1 and Rieske protein UQCRFS1, 2 core protein subunits UQCRC1/QCR1 and UQCRC2/QCR2, and 6 low-molecular weight protein subunits UQCRH/QCR6, UQCRB/QCR7, UQCRQ/QCR8, UQCR10/QCR9, UQCR11/QCR10 and subunit 9, the cleavage product of Rieske protein UQCRFS1. The complex exists as an obligatory dimer and forms supercomplexes (SCs) in the inner mitochondrial membrane with NADH-ubiquinone oxidoreductase (complex I, CI) and cytochrome c oxidase (complex IV, CIV), resulting in different assemblies (supercomplex SCI(1)III(2)IV(1) and megacomplex MCI(2)III(2)IV(2)). Interacts with UQCC6.

The protein resides in the mitochondrion inner membrane. Its function is as follows. Component of the ubiquinol-cytochrome c oxidoreductase, a multisubunit transmembrane complex that is part of the mitochondrial electron transport chain which drives oxidative phosphorylation. The respiratory chain contains 3 multisubunit complexes succinate dehydrogenase (complex II, CII), ubiquinol-cytochrome c oxidoreductase (cytochrome b-c1 complex, complex III, CIII) and cytochrome c oxidase (complex IV, CIV), that cooperate to transfer electrons derived from NADH and succinate to molecular oxygen, creating an electrochemical gradient over the inner membrane that drives transmembrane transport and the ATP synthase. The cytochrome b-c1 complex catalyzes electron transfer from ubiquinol to cytochrome c, linking this redox reaction to translocation of protons across the mitochondrial inner membrane, with protons being carried across the membrane as hydrogens on the quinol. In the process called Q cycle, 2 protons are consumed from the matrix, 4 protons are released into the intermembrane space and 2 electrons are passed to cytochrome c. The polypeptide is Cytochrome b-c1 complex subunit 8 (Uqcrq) (Mus musculus (Mouse)).